The sequence spans 166 residues: Desiccation-related protein At2g46140 (166 aa).

It belongs to the LEA type 2 family.

The chain is Desiccation-related protein At2g46140 from Arabidopsis thaliana (Mouse-ear cress).